The sequence spans 232 residues: Large ribosomal subunit protein uL1 (232 aa).

The protein belongs to the universal ribosomal protein uL1 family. Part of the 50S ribosomal subunit.

Binds directly to 23S rRNA. The L1 stalk is quite mobile in the ribosome, and is involved in E site tRNA release. In terms of biological role, protein L1 is also a translational repressor protein, it controls the translation of the L11 operon by binding to its mRNA. The chain is Large ribosomal subunit protein uL1 from Roseobacter denitrificans (strain ATCC 33942 / OCh 114) (Erythrobacter sp. (strain OCh 114)).